Reading from the N-terminus, the 279-residue chain is Borealin (279 aa).

Residues 135-152 (KTKAKVAAKKPSTARKTR) show a composition bias toward basic residues. The interval 135–180 (KTKAKVAAKKPSTARKTRASTANLTNTSKRTSKRGRATPSASKQIE) is disordered. Residues 153–163 (ASTANLTNTSK) are compositionally biased toward polar residues.

The protein belongs to the borealin family. Component of the CPC at least composed of survivin/birc5, incenp, cdca8/borealin and/or cdca9/dasra-A, and aurkb/aurora-B. Interacts with incenp (via N-terminus).

The protein localises to the nucleus. Its subcellular location is the chromosome. It is found in the centromere. The protein resides in the cytoplasm. It localises to the cytoskeleton. The protein localises to the spindle. Its function is as follows. Component of the chromosomal passenger complex (CPC), a complex that acts as a key regulator of mitosis. The CPC complex has essential functions at the centromere in ensuring correct chromosome alignment and segregation and is required for chromatin-induced microtubule stabilization and spindle assembly. Contributes to CPC function by facilitating loading of the CPC onto chromosomes. This Xenopus tropicalis (Western clawed frog) protein is Borealin (cdca8).